The chain runs to 132 residues: Small ribosomal subunit protein uS11 (132 aa).

Residues 1–24 are disordered; sequence MAAPKQAARKPRRRDRKSVPVGQA. Basic residues predominate over residues 7–16; that stretch reads AARKPRRRDR.

It belongs to the universal ribosomal protein uS11 family. In terms of assembly, part of the 30S ribosomal subunit. Interacts with proteins S7 and S18. Binds to IF-3.

Its function is as follows. Located on the platform of the 30S subunit, it bridges several disparate RNA helices of the 16S rRNA. Forms part of the Shine-Dalgarno cleft in the 70S ribosome. In Bifidobacterium longum (strain DJO10A), this protein is Small ribosomal subunit protein uS11.